Consider the following 320-residue polypeptide: Iminosuccinate reductase (320 aa).

The active-site Proton donor/acceptor is the Lys67. NAD(+)-binding positions include Arg110, 137 to 138 (HQ), Asn159, Ser199, 219 to 222 (MGTD), Lys226, and Gly291.

The protein belongs to the ornithine cyclodeaminase/mu-crystallin family. BhcD subfamily.

It carries out the reaction L-aspartate + NAD(+) = iminosuccinate + NADH + H(+). Imine reductase that catalyzes the NADH-dependent reduction of iminosuccinate to L-aspartate. Is essential for the growth of P.denitrificans in the presence of glycolate and glyoxylate since it functions in glyoxylate assimilation via the beta-hydroxyaspartate cycle (BHAC). Thereby BhcD regenerates the amino group donor for the first step of the BHAC. This chain is Iminosuccinate reductase, found in Paracoccus denitrificans (strain Pd 1222).